The chain runs to 397 residues: 2,3-bisphosphoglycerate-independent phosphoglycerate mutase (397 aa).

This sequence belongs to the BPG-independent phosphoglycerate mutase family. A-PGAM subfamily.

It carries out the reaction (2R)-2-phosphoglycerate = (2R)-3-phosphoglycerate. The protein operates within carbohydrate degradation; glycolysis; pyruvate from D-glyceraldehyde 3-phosphate: step 3/5. Functionally, catalyzes the interconversion of 2-phosphoglycerate and 3-phosphoglycerate. In Methanosarcina acetivorans (strain ATCC 35395 / DSM 2834 / JCM 12185 / C2A), this protein is 2,3-bisphosphoglycerate-independent phosphoglycerate mutase.